The chain runs to 335 residues: Transcriptional coactivator YAP1-B (335 aa).

A compositionally biased stretch (low complexity) spans 1–13 (MEPGSQQQPSAPG). A disordered region spans residues 1-21 (MEPGSQQQPSAPGQQPPPVGH). At Ser-30 the chain carries Phosphoserine; by LATS1 and LATS2. Positions 114 to 124 (MNQQRLSQSAP) are enriched in polar residues. Positions 114 to 146 (MNQQRLSQSAPVKSPPALQPQSPPSGVLGSGGN) are disordered. The segment covering 126–136 (KSPPALQPQSP) has biased composition (pro residues). The interval 137 to 335 (PSGVLGSGGN…LDKESFLTWL (199 aa)) is transactivation domain. The stretch at 145 to 173 (GNQQMRLQQLQMEKERLRLKHQELLRQVR) forms a coiled coil.

The protein belongs to the YAP1 family. In terms of processing, phosphorylated by lats1 and lats2; leading to cytoplasmic translocation and inactivation.

Its subcellular location is the cytoplasm. The protein resides in the nucleus. It localises to the cell junction. It is found in the tight junction. The protein localises to the cell membrane. In terms of biological role, transcriptional regulator which can act both as a coactivator and a corepressor and is the critical downstream regulatory target in the Hippo signaling pathway that plays a pivotal role in organ size control and tumor suppression by restricting proliferation and promoting apoptosis. Plays a key role in tissue tension and 3D tissue shape by regulating cortical actomyosin network formation. The protein is Transcriptional coactivator YAP1-B of Xenopus laevis (African clawed frog).